The following is a 47-amino-acid chain: Mu-theraphotoxin-An1a (47 aa).

Disulfide bonds link cysteine 4–cysteine 34, cysteine 8–cysteine 39, and cysteine 22–cysteine 44.

Post-translationally, contains 3 disulfide bonds. In terms of tissue distribution, expressed by the venom gland.

It localises to the secreted. Is toxic to insects. Reduces amplitude and frequency of spontaneous firing and inhibits voltage-gated sodium current (Nav) in the dorsal unpaired median (DUM) neurons of P.americana. This Acanthoscurria natalensis (Tarantula spider) protein is Mu-theraphotoxin-An1a.